The chain runs to 296 residues: Guided entry of tail-anchored proteins factor CAMLG (296 aa).

Residues 1–79 (MESMAVATDG…SDKLNSLSVP (79 aa)) form a disordered region. At 1–189 (MESMAVATDG…NTTEEFDSFR (189 aa)) the chain is on the cytoplasmic side. Position 55 is a phosphoserine (Ser55). Residues 61–72 (SQTKSKQQDSDK) are compositionally biased toward basic and acidic residues. A helical membrane pass occupies residues 190–207 (IFRLVGCALLALGVRAFV). The Lumenal segment spans residues 208–212 (CKYLS). Residues Cys208 and Cys284 are joined by a disulfide bond. A helical transmembrane segment spans residues 213 to 231 (IFAPFLTLQLAYMGLYKYF). Residues 232–269 (PKSEKKIKTTVLTAALLLSGIPAEVINRSMDTYSKMGE) lie on the Cytoplasmic side of the membrane. A helical transmembrane segment spans residues 270-288 (VFTDLCVYFFTFIFCHELL). The Lumenal segment spans residues 289-296 (DYWGSEVP).

Component of the Golgi to ER traffic (GET) complex, which is composed of GET1/WRB, CAMLG/GET2 and GET3/TRC40. Within the complex, GET1 and CAMLG form a heterotetramer which is stabilized by phosphatidylinositol binding and which binds to the GET3 homodimer. Interacts (via C-terminus) with GET1. Interacts (via N-terminus) with GET3. GET3 shows a higher affinity for CAMLG than for GET1. Interacts (via N-terminus) with TNFRSF13B/TACI (via C-terminus). As to quaternary structure, (Microbial infection) Interacts with human herpes virus 8/HHV-8 protein K7; this interaction modulates intracellular calcium concentration. As to expression, ubiquitous. Highest levels in brain, testis and ovary.

The protein localises to the endoplasmic reticulum membrane. Required for the post-translational delivery of tail-anchored (TA) proteins to the endoplasmic reticulum. Together with GET1/WRB, acts as a membrane receptor for soluble GET3/TRC40, which recognizes and selectively binds the transmembrane domain of TA proteins in the cytosol. Required for the stability of GET1. Stimulates calcium signaling in T cells through its involvement in elevation of intracellular calcium. Essential for the survival of peripheral follicular B cells. The sequence is that of Guided entry of tail-anchored proteins factor CAMLG from Homo sapiens (Human).